Consider the following 400-residue polypeptide: Carnosine N-methyltransferase (400 aa).

The interval 1 to 49 (MQRRRRAPPASQPAQDSGHSEEVEVQFSAGRLGSAAPAGPPVRGTAEDE) is disordered. S-adenosyl-L-methionine contacts are provided by Gln155, Arg158, Gly199, Glu220, Asp286, Phe287, and Cys303. Asp307 provides a ligand contact to carnosine. An S-adenosyl-L-methionine-binding site is contributed by Tyr315. Residues His338 and Tyr389 each contribute to the carnosine site.

It belongs to the carnosine N-methyltransferase family. Homodimer. Each monomer accommodates one molecule of carnosine in its active pocket, precisely anchoring the histidine imidazole ring such that only N1 is exposed and deprotonated for methylation. As to expression, expressed at higher level in skeletal muscle compared to other tissues.

The protein localises to the cytoplasm. The protein resides in the cytosol. Its subcellular location is the nucleus. The enzyme catalyses carnosine + S-adenosyl-L-methionine = anserine + S-adenosyl-L-homocysteine + H(+). N-methyltransferase that catalyzes the formation of anserine (beta-alanyl-N(Pi)-methyl-L-histidine) from carnosine. Anserine, a methylated derivative of carnosine (beta-alanyl-L-histidine), is an abundant constituent of vertebrate skeletal muscles. Also methylates other L-histidine-containing di- and tripeptides such as Gly-Gly-His, Gly-His and homocarnosine (GABA-His). The sequence is that of Carnosine N-methyltransferase from Rattus norvegicus (Rat).